A 116-amino-acid polypeptide reads, in one-letter code: RNA guanine-N7 methyltransferase activating subunit (116 aa).

An interaction with RNMT region spans residues 1–55; that stretch reads MAEALGAQELYEKMFEQRFTANDKEYQEYLKREQDQPPIVEDWKMGNQRNTDRYR. Positions 31-116 are disordered; that stretch reads KREQDQPPIV…SNQRFHSDRY (86 aa). An RNMT-activating domain motif is present at residues 36–42; that stretch reads QPPIVED. The segment at 56–116 is RNA-binding; that stretch reads DNRHHRGWDG…SNQRFHSDRY (61 aa). Residues 67 to 78 are compositionally biased toward low complexity; sequence QNWSSNSYNQSY. Over residues 97–110 the composition is skewed to polar residues; that stretch reads YQQGHYTHNPSNQR.

Belongs to the RAM family.

The protein resides in the nucleus. Its function is as follows. Regulatory subunit of the mRNA-capping methyltransferase RNMT:RAMAC complex that methylates the N7 position of the added guanosine to the 5'-cap structure of mRNAs. Promotes the recruitment of the methyl donor, S-adenosyl-L-methionine, to RNMT. Regulates RNMT expression by a post-transcriptional stabilizing mechanism. Binds RNA. This is RNA guanine-N7 methyltransferase activating subunit (ramac) from Xenopus tropicalis (Western clawed frog).